Reading from the N-terminus, the 236-residue chain is Purine nucleoside phosphorylase DeoD-type 2 (236 aa).

H5 is an a purine D-ribonucleoside binding site. Phosphate-binding positions include G21, R25, R44, and 88–91 (RIGS). Residues 180–182 (DME) and 204–205 (SD) each bind a purine D-ribonucleoside. D205 functions as the Proton donor in the catalytic mechanism.

The protein belongs to the PNP/UDP phosphorylase family. As to quaternary structure, homohexamer; trimer of homodimers.

It catalyses the reaction a purine D-ribonucleoside + phosphate = a purine nucleobase + alpha-D-ribose 1-phosphate. The enzyme catalyses a purine 2'-deoxy-D-ribonucleoside + phosphate = a purine nucleobase + 2-deoxy-alpha-D-ribose 1-phosphate. Functionally, catalyzes the reversible phosphorolytic breakdown of the N-glycosidic bond in the beta-(deoxy)ribonucleoside molecules, with the formation of the corresponding free purine bases and pentose-1-phosphate. The chain is Purine nucleoside phosphorylase DeoD-type 2 from Vibrio cholerae serotype O1 (strain ATCC 39315 / El Tor Inaba N16961).